Here is an 879-residue protein sequence, read N- to C-terminus: Alanine--tRNA ligase (879 aa).

4 residues coordinate Zn(2+): histidine 566, histidine 570, cysteine 668, and histidine 672.

The protein belongs to the class-II aminoacyl-tRNA synthetase family. Zn(2+) is required as a cofactor.

It is found in the cytoplasm. The catalysed reaction is tRNA(Ala) + L-alanine + ATP = L-alanyl-tRNA(Ala) + AMP + diphosphate. In terms of biological role, catalyzes the attachment of alanine to tRNA(Ala) in a two-step reaction: alanine is first activated by ATP to form Ala-AMP and then transferred to the acceptor end of tRNA(Ala). Also edits incorrectly charged Ser-tRNA(Ala) and Gly-tRNA(Ala) via its editing domain. The chain is Alanine--tRNA ligase from Clostridium botulinum (strain Loch Maree / Type A3).